The primary structure comprises 458 residues: MALWGGRFTQAADQRFKQFNDSLRFDYRLAEQDIVGSVAWSKALVTVGVLTADEQRQLEEALNVLLEEVRANPQQILQSDAEDIHSWVEGKLIDKVGQLGKKLHTGRSRNDQVATDLKLWCKETVRELLTANRQLQSALVETAQANQDAVMPGYTHLQRAQPVTFAHWCLAYVEMLARDESRLQDTLKRLDVSPLGCGALAGTAYEIDREQLAGWLGFTSATRNSLDSVSDRDHVLELLSDAAIGMVHLSRFAEDLIFFNSGEAGFVELSDRVTSGSSLMPQKKNPDALELIRGKCGRVQGALTGMMMTLKGLPLAYNKDMQEDKEGLFDALDTWLDCLHMAALVLDGIQVKRPRCQDAAQQGYANATELADYLVAKGVPFREAHHIVGEAVVEAIRQGKPLEALPLADLQKFSRVIGDDVYPILSLQSCLDKRAAKGGVSPQQVAQAINDAKARLAL.

The protein belongs to the lyase 1 family. Argininosuccinate lyase subfamily.

It localises to the cytoplasm. The enzyme catalyses 2-(N(omega)-L-arginino)succinate = fumarate + L-arginine. The protein operates within amino-acid biosynthesis; L-arginine biosynthesis; L-arginine from L-ornithine and carbamoyl phosphate: step 3/3. This chain is Argininosuccinate lyase, found in Salmonella choleraesuis (strain SC-B67).